Consider the following 375-residue polypeptide: Growth/differentiation factor 8 (375 aa).

The first 23 residues, 1–23, serve as a signal peptide directing secretion; it reads MQKLQLCVYIYLFMLIVAGPVDL. A propeptide spanning residues 24–266 is cleaved from the precursor; that stretch reads NENSEQKENV…VTDTPKRSRR (243 aa). N-linked (GlcNAc...) asparagine glycosylation occurs at Asn-71. 4 disulfide bridges follow: Cys-272-Cys-282, Cys-281-Cys-340, Cys-309-Cys-372, and Cys-313-Cys-374.

It belongs to the TGF-beta family. As to quaternary structure, homodimer; disulfide-linked. Interacts with WFIKKN2, leading to inhibit its activity. Interacts with FSTL3. Post-translationally, synthesized as large precursor molecule that undergoes proteolytic cleavage to generate an N-terminal propeptide and a disulfide linked C-terminal dimer, which is the biologically active molecule. The circulating form consists of a latent complex of the C-terminal dimer and other proteins, including its propeptide, which maintain the C-terminal dimer in a latent, inactive state. Ligand activation requires additional cleavage of the prodomain by a tolloid-like metalloproteinase.

The protein resides in the secreted. Its function is as follows. Acts specifically as a negative regulator of skeletal muscle growth. This Pan paniscus (Pygmy chimpanzee) protein is Growth/differentiation factor 8 (MSTN).